The chain runs to 81 residues: 8.6 kDa transglutaminase substrate (81 aa).

In terms of assembly, multimeric. In terms of tissue distribution, hemolymph; Hemocyte.

This is 8.6 kDa transglutaminase substrate from Tachypleus tridentatus (Japanese horseshoe crab).